Consider the following 254-residue polypeptide: 4-hydroxy-tetrahydrodipicolinate reductase (254 aa).

An NAD(+)-binding site is contributed by 13–18 (GAAGRM). Residue Arg-39 coordinates NADP(+). NAD(+) is bound by residues 86–88 (GTT) and 110–113 (AANT). Residue His-143 is the Proton donor/acceptor of the active site. His-144 provides a ligand contact to (S)-2,3,4,5-tetrahydrodipicolinate. Lys-147 serves as the catalytic Proton donor. Residue 153 to 154 (GT) coordinates (S)-2,3,4,5-tetrahydrodipicolinate.

The protein belongs to the DapB family.

Its subcellular location is the cytoplasm. The enzyme catalyses (S)-2,3,4,5-tetrahydrodipicolinate + NAD(+) + H2O = (2S,4S)-4-hydroxy-2,3,4,5-tetrahydrodipicolinate + NADH + H(+). It catalyses the reaction (S)-2,3,4,5-tetrahydrodipicolinate + NADP(+) + H2O = (2S,4S)-4-hydroxy-2,3,4,5-tetrahydrodipicolinate + NADPH + H(+). The protein operates within amino-acid biosynthesis; L-lysine biosynthesis via DAP pathway; (S)-tetrahydrodipicolinate from L-aspartate: step 4/4. Its function is as follows. Catalyzes the conversion of 4-hydroxy-tetrahydrodipicolinate (HTPA) to tetrahydrodipicolinate. The protein is 4-hydroxy-tetrahydrodipicolinate reductase of Zymomonas mobilis subsp. mobilis (strain ATCC 31821 / ZM4 / CP4).